A 335-amino-acid polypeptide reads, in one-letter code: MNFKKLPKIELHCHLDGSLRIDTILDIAKKDNIPLPSYNKKELINYVSIMDDCNSLDEYLNKFFIPNKVMQTKENLKRIAFELLEDVAADNVKYIEVRFAPLLHVEKGLNIEEIIESVLAGIKEAEKLYDIKGNLILGCMRNMDIPSAFEVVKKGAKFIGKGVVAIDLCAGEEPHFPGKYIEVLKLAKECGYRITIHAGEAGVGENVLEAINLLNAERIGHGIYIKNCAEAYKLVKEKNIPLEVCPTSNLHTKAFESYETHPFMDFLKDGIKVTINTDNMTVSNTTITKELEMLNKFCGLSIEDYKILYLNAVEASFASPETKEILKSYANEITA.

The Zn(2+) site is built by histidine 12 and histidine 14. Residues histidine 14 and aspartate 16 each coordinate substrate. Position 197 (histidine 197) interacts with Zn(2+). Glutamate 200 (proton donor) is an active-site residue. Zn(2+) is bound at residue aspartate 278.

Belongs to the metallo-dependent hydrolases superfamily. Adenosine and AMP deaminases family. Adenosine deaminase subfamily. It depends on Zn(2+) as a cofactor.

It catalyses the reaction adenosine + H2O + H(+) = inosine + NH4(+). It carries out the reaction 2'-deoxyadenosine + H2O + H(+) = 2'-deoxyinosine + NH4(+). In terms of biological role, catalyzes the hydrolytic deamination of adenosine and 2-deoxyadenosine. This Clostridium botulinum (strain ATCC 19397 / Type A) protein is Adenosine deaminase.